We begin with the raw amino-acid sequence, 391 residues long: Imidazolonepropionase (391 aa).

2 residues coordinate Fe(3+): histidine 72 and histidine 74. Zn(2+) contacts are provided by histidine 72 and histidine 74. Residues arginine 81, tyrosine 139, and histidine 166 each contribute to the 4-imidazolone-5-propanoate site. Tyrosine 139 contacts N-formimidoyl-L-glutamate. Fe(3+) is bound at residue histidine 229. Zn(2+) is bound at residue histidine 229. Residue glutamine 232 participates in 4-imidazolone-5-propanoate binding. Aspartate 303 is a binding site for Fe(3+). Aspartate 303 contacts Zn(2+). N-formimidoyl-L-glutamate is bound by residues asparagine 305 and glycine 307. A 4-imidazolone-5-propanoate-binding site is contributed by serine 308.

The protein belongs to the metallo-dependent hydrolases superfamily. HutI family. Zn(2+) serves as cofactor. It depends on Fe(3+) as a cofactor.

Its subcellular location is the cytoplasm. The enzyme catalyses 4-imidazolone-5-propanoate + H2O = N-formimidoyl-L-glutamate. It functions in the pathway amino-acid degradation; L-histidine degradation into L-glutamate; N-formimidoyl-L-glutamate from L-histidine: step 3/3. Functionally, catalyzes the hydrolytic cleavage of the carbon-nitrogen bond in imidazolone-5-propanoate to yield N-formimidoyl-L-glutamate. It is the third step in the universal histidine degradation pathway. The protein is Imidazolonepropionase of Streptomyces coelicolor (strain ATCC BAA-471 / A3(2) / M145).